A 135-amino-acid polypeptide reads, in one-letter code: Serine protease inhibitor swm-1 (135 aa).

Residues 1-16 form the signal peptide; sequence MRILVIITCIVAVATA. Disulfide bonds link Cys-20-Cys-53, Cys-29-Cys-48, Cys-33-Cys-44, Cys-37-Cys-73, Cys-55-Cys-67, Cys-80-Cys-114, Cys-89-Cys-109, Cys-93-Cys-105, Cys-97-Cys-133, and Cys-116-Cys-127. 2 TIL domains span residues 20–73 and 80–133; these read CEAN…VSEC and CPEN…KKDC. Asn-83 carries an N-linked (GlcNAc...) asparagine glycan.

In male, expressed in the vas deferens cuboidal cells and, in posterior body wall and male-specific diagonal muscles. In hermaphrodites, expressed in posterior body wall muscles and spermatheca.

Its subcellular location is the secreted. The protein resides in the cytoplasmic vesicle. The protein localises to the secretory vesicle lumen. Functionally, serine protease inhibitor. Probably by inhibiting serine protease tyr-5 in males, prevents the maturation of spermatids into mature motile spermatozoa until their transfer into a hermaphrodite. Also required for efficient sperm transfer and thus for male fertility. In Caenorhabditis elegans, this protein is Serine protease inhibitor swm-1.